We begin with the raw amino-acid sequence, 244 residues long: 2,3-bisphosphoglycerate-dependent phosphoglycerate mutase (244 aa).

Residues 8-15 (RHGESNWN), 21-22 (TG), R60, 87-90 (ERHY), K98, 114-115 (RR), and 181-182 (GN) contribute to the substrate site. H9 functions as the Tele-phosphohistidine intermediate in the catalytic mechanism. E87 serves as the catalytic Proton donor/acceptor.

Belongs to the phosphoglycerate mutase family. BPG-dependent PGAM subfamily.

The enzyme catalyses (2R)-2-phosphoglycerate = (2R)-3-phosphoglycerate. It participates in carbohydrate degradation; glycolysis; pyruvate from D-glyceraldehyde 3-phosphate: step 3/5. Functionally, catalyzes the interconversion of 2-phosphoglycerate and 3-phosphoglycerate. This chain is 2,3-bisphosphoglycerate-dependent phosphoglycerate mutase, found in Frankia alni (strain DSM 45986 / CECT 9034 / ACN14a).